The sequence spans 337 residues: Dihydroorotate dehydrogenase (quinone) (337 aa).

Residues 58 to 62 and T82 contribute to the FMN site; that span reads AGLDK. K62 contacts substrate. 107–111 contacts substrate; it reads NCMGF. FMN contacts are provided by N137 and N170. N170 contributes to the substrate binding site. The active-site Nucleophile is the S173. Substrate is bound at residue N175. FMN-binding residues include K215 and T243. Residue 244-245 coordinates substrate; that stretch reads NT. Residues G266, G294, and 315–316 contribute to the FMN site; that span reads YS.

Belongs to the dihydroorotate dehydrogenase family. Type 2 subfamily. Monomer. FMN serves as cofactor.

The protein localises to the cell membrane. The catalysed reaction is (S)-dihydroorotate + a quinone = orotate + a quinol. It participates in pyrimidine metabolism; UMP biosynthesis via de novo pathway; orotate from (S)-dihydroorotate (quinone route): step 1/1. In terms of biological role, catalyzes the conversion of dihydroorotate to orotate with quinone as electron acceptor. The protein is Dihydroorotate dehydrogenase (quinone) of Dichelobacter nodosus (strain VCS1703A).